The following is a 375-amino-acid chain: Acetylornithine aminotransferase (375 aa).

Pyridoxal 5'-phosphate-binding positions include 102 to 103 and F129; that span reads GA. N(2)-acetyl-L-ornithine is bound at residue R132. 214–217 is a binding site for pyridoxal 5'-phosphate; sequence DEVQ. K243 is subject to N6-(pyridoxal phosphate)lysine. S271 is a binding site for N(2)-acetyl-L-ornithine. T272 is a binding site for pyridoxal 5'-phosphate.

Belongs to the class-III pyridoxal-phosphate-dependent aminotransferase family. ArgD subfamily. Homodimer. Pyridoxal 5'-phosphate serves as cofactor.

It localises to the cytoplasm. It catalyses the reaction N(2)-acetyl-L-ornithine + 2-oxoglutarate = N-acetyl-L-glutamate 5-semialdehyde + L-glutamate. It participates in amino-acid biosynthesis; L-arginine biosynthesis; N(2)-acetyl-L-ornithine from L-glutamate: step 4/4. The chain is Acetylornithine aminotransferase from Archaeoglobus fulgidus (strain ATCC 49558 / DSM 4304 / JCM 9628 / NBRC 100126 / VC-16).